Here is a 284-residue protein sequence, read N- to C-terminus: NAD kinase (284 aa).

The Proton acceptor role is filled by aspartate 70. Residues aspartate 70–glycine 71, asparagine 139–glutamate 140, lysine 167, aspartate 169, leucine 177, threonine 180–serine 185, and glutamine 236 each bind NAD(+).

It belongs to the NAD kinase family. A divalent metal cation serves as cofactor.

It is found in the cytoplasm. The enzyme catalyses NAD(+) + ATP = ADP + NADP(+) + H(+). In terms of biological role, involved in the regulation of the intracellular balance of NAD and NADP, and is a key enzyme in the biosynthesis of NADP. Catalyzes specifically the phosphorylation on 2'-hydroxyl of the adenosine moiety of NAD to yield NADP. In Helicobacter pylori (strain G27), this protein is NAD kinase.